Here is a 247-residue protein sequence, read N- to C-terminus: MNLHALCLLLLLLGSSTKAGEIIGGTECIPHSRPYMAYLEIVTSDNYLSACSGFLIRRNFVLTAAHCAGRSITVLLGAHNKTYKEDTWQKLEVEKQFIHPNYDKRLVLHDIMLLKLKEKAKLTLGVGTLPLSANFNFIPPGRMCRAVGWGRTNVNEPASDTLQEVKMRLQEPQSCKHFTSFQHKSQLCVGNPKKMQNVYKGDSGGPLLCAGIAQGIASYVHPNAKPPAVFTRISHYRPWINKILREN.

An N-terminal signal peptide occupies residues 1–19 (MNLHALCLLLLLLGSSTKA). Positions 20–21 (GE) are cleaved as a propeptide — activation peptide. Residues 22-245 (IIGGTECIPH…YRPWINKILR (224 aa)) enclose the Peptidase S1 domain. The cysteines at positions 51 and 67 are disulfide-linked. Catalysis depends on H66, which acts as the Charge relay system. N80 is a glycosylation site (N-linked (GlcNAc...) asparagine). D110 serves as the catalytic Charge relay system. 2 cysteine pairs are disulfide-bonded: C144-C209 and C175-C188. The active-site Charge relay system is S203.

It belongs to the peptidase S1 family. Granzyme subfamily. As to expression, mast cells.

The protein localises to the secreted. The protein resides in the cytoplasmic granule. It carries out the reaction Preferential cleavage: Phe-|-Xaa &gt; Tyr-|-Xaa &gt; Trp-|-Xaa &gt; Leu-|-Xaa.. Major secreted protease of mast cells with suspected roles in vasoactive peptide generation, extracellular matrix degradation, and regulation of gland secretion. This Rattus norvegicus (Rat) protein is Chymase (Cma1).